Consider the following 608-residue polypeptide: Amino-acid acetyltransferase, mitochondrial (608 aa).

Residues Leu402–Leu604 enclose the N-acetyltransferase domain.

This sequence belongs to the acetyltransferase family.

It localises to the mitochondrion. It catalyses the reaction L-glutamate + acetyl-CoA = N-acetyl-L-glutamate + CoA + H(+). It functions in the pathway amino-acid biosynthesis; L-arginine biosynthesis; N(2)-acetyl-L-ornithine from L-glutamate: step 1/4. Functionally, N-acetylglutamate synthase involved in arginine biosynthesis. The chain is Amino-acid acetyltransferase, mitochondrial (ARG2) from Yarrowia lipolytica (strain CLIB 122 / E 150) (Yeast).